Reading from the N-terminus, the 39-residue chain is Photosystem II reaction center protein Y (39 aa).

A helical membrane pass occupies residues 5–23 (VLIVLTPLLIAGGWAVFNI).

The protein belongs to the PsbY family. PSII is composed of 1 copy each of membrane proteins PsbA, PsbB, PsbC, PsbD, PsbE, PsbF, PsbH, PsbI, PsbJ, PsbK, PsbL, PsbM, PsbT, PsbX, PsbY, PsbZ, Psb30/Ycf12, peripheral proteins PsbO, CyanoQ (PsbQ), PsbU, PsbV and a large number of cofactors. It forms dimeric complexes.

The protein resides in the cellular thylakoid membrane. In terms of biological role, loosely associated component of the core of photosystem II (PSII), it is not always seen in crystals. PSII is a light-driven water plastoquinone oxidoreductase, using light energy to abstract electrons from H(2)O, generating a proton gradient subsequently used for ATP formation. This chain is Photosystem II reaction center protein Y, found in Microcystis aeruginosa (strain NIES-843 / IAM M-2473).